The chain runs to 1270 residues: DNA-directed RNA polymerase subunit beta (1270 aa).

Belongs to the RNA polymerase beta chain family. The RNAP catalytic core consists of 2 alpha, 1 beta, 1 beta' and 1 omega subunit. When a sigma factor is associated with the core the holoenzyme is formed, which can initiate transcription.

The enzyme catalyses RNA(n) + a ribonucleoside 5'-triphosphate = RNA(n+1) + diphosphate. Functionally, DNA-dependent RNA polymerase catalyzes the transcription of DNA into RNA using the four ribonucleoside triphosphates as substrates. The protein is DNA-directed RNA polymerase subunit beta of Flavobacterium johnsoniae (strain ATCC 17061 / DSM 2064 / JCM 8514 / BCRC 14874 / CCUG 350202 / NBRC 14942 / NCIMB 11054 / UW101) (Cytophaga johnsonae).